The sequence spans 118 residues: Large ribosomal subunit protein bL20 (118 aa).

This sequence belongs to the bacterial ribosomal protein bL20 family.

Its function is as follows. Binds directly to 23S ribosomal RNA and is necessary for the in vitro assembly process of the 50S ribosomal subunit. It is not involved in the protein synthesizing functions of that subunit. In Lactobacillus acidophilus (strain ATCC 700396 / NCK56 / N2 / NCFM), this protein is Large ribosomal subunit protein bL20.